The primary structure comprises 289 residues: Dehydrodolichyl diphosphate synthase 4 (289 aa).

A helical membrane pass occupies residues leucine 2–proline 22.

It belongs to the UPP synthase family. Mg(2+) is required as a cofactor.

The protein resides in the endoplasmic reticulum membrane. It participates in protein modification; protein glycosylation. Catalyzes cis-prenyl chain elongation to produce the polyprenyl backbone of dolichol, a glycosyl carrier-lipid required for the biosynthesis of several classes of glycoprotein. In Arabidopsis thaliana (Mouse-ear cress), this protein is Dehydrodolichyl diphosphate synthase 4.